The sequence spans 298 residues: GTPase Era (298 aa).

Positions 8–176 (HCGSVAVIGR…VRDVLKLLPE (169 aa)) constitute an Era-type G domain. A G1 region spans residues 16-23 (GRPNVGKS). GTP is bound at residue 16 to 23 (GRPNVGKS). The G2 stretch occupies residues 42–46 (QTTRH). The G3 stretch occupies residues 63-66 (DTPG). GTP is bound by residues 63-67 (DTPGL) and 125-128 (NKID). The interval 125–128 (NKID) is G4. A G5 region spans residues 155 to 157 (ISA). In terms of domain architecture, KH type-2 spans 199-283 (VREQLMRQLG…FLETWVRVRE (85 aa)).

This sequence belongs to the TRAFAC class TrmE-Era-EngA-EngB-Septin-like GTPase superfamily. Era GTPase family. As to quaternary structure, monomer.

Its subcellular location is the cytoplasm. It is found in the cell inner membrane. An essential GTPase that binds both GDP and GTP, with rapid nucleotide exchange. Plays a role in 16S rRNA processing and 30S ribosomal subunit biogenesis and possibly also in cell cycle regulation and energy metabolism. This Stenotrophomonas maltophilia (strain K279a) protein is GTPase Era.